The chain runs to 190 residues: UPF0725 protein At2g20625 (190 aa).

This sequence belongs to the UPF0725 (EMB2204) family.

The sequence is that of UPF0725 protein At2g20625 from Arabidopsis thaliana (Mouse-ear cress).